A 301-amino-acid chain; its full sequence is Phosphoribosylaminoimidazole-succinocarboxamide synthase (301 aa).

This sequence belongs to the SAICAR synthetase family.

The enzyme catalyses 5-amino-1-(5-phospho-D-ribosyl)imidazole-4-carboxylate + L-aspartate + ATP = (2S)-2-[5-amino-1-(5-phospho-beta-D-ribosyl)imidazole-4-carboxamido]succinate + ADP + phosphate + 2 H(+). Its pathway is purine metabolism; IMP biosynthesis via de novo pathway; 5-amino-1-(5-phospho-D-ribosyl)imidazole-4-carboxamide from 5-amino-1-(5-phospho-D-ribosyl)imidazole-4-carboxylate: step 1/2. This Mycolicibacterium vanbaalenii (strain DSM 7251 / JCM 13017 / BCRC 16820 / KCTC 9966 / NRRL B-24157 / PYR-1) (Mycobacterium vanbaalenii) protein is Phosphoribosylaminoimidazole-succinocarboxamide synthase.